We begin with the raw amino-acid sequence, 137 residues long: MLQPKRTKFRKQFKGRIHGTAKGGTNLDFGGFGLKALEPNRVTAREIEAARRAITREMKRAGRVWIRIFPDLPVTSKPTEVRMGKGKGAVDYWAARVKPGRIMFEIDGVSEETAREALRLGAAKLSVRTRFVQRIAE.

This sequence belongs to the universal ribosomal protein uL16 family. In terms of assembly, part of the 50S ribosomal subunit.

Functionally, binds 23S rRNA and is also seen to make contacts with the A and possibly P site tRNAs. The polypeptide is Large ribosomal subunit protein uL16 (Mesorhizobium japonicum (strain LMG 29417 / CECT 9101 / MAFF 303099) (Mesorhizobium loti (strain MAFF 303099))).